A 313-amino-acid polypeptide reads, in one-letter code: uncharacterized protein (313 aa).

Residues 6–152 (YDILENPEPN…YHASMEKMTG (147 aa)) enclose the N-acetyltransferase domain.

In terms of biological role, to the C-terminal of C.elegans F21C10.9. This is an uncharacterized protein from Caenorhabditis elegans.